We begin with the raw amino-acid sequence, 146 residues long: Kappa-casein (146 aa).

3 O-linked (GalNAc...) threonine glycosylation sites follow: Thr107, Thr112, and Thr118. A Phosphoserine modification is found at Ser143.

The protein belongs to the kappa-casein family. In terms of tissue distribution, mammary gland specific. Secreted in milk.

Its subcellular location is the secreted. Kappa-casein stabilizes micelle formation, preventing casein precipitation in milk. This Dicotyles tajacu (Collared peccary) protein is Kappa-casein (CSN3).